We begin with the raw amino-acid sequence, 447 residues long: UPF0210 protein LCK_00974 (447 aa).

The protein belongs to the UPF0210 family. In terms of assembly, homodimer.

This chain is UPF0210 protein LCK_00974, found in Leuconostoc citreum (strain KM20).